A 693-amino-acid chain; its full sequence is Elongation factor G (693 aa).

The tr-type G domain maps to 8–282; the sequence is EKTRNIGIMA…AVIDYLPSPL (275 aa). Residues 17 to 24, 81 to 85, and 135 to 138 each bind GTP; these read AHIDAGKT, DTPGH, and NKMD.

Belongs to the TRAFAC class translation factor GTPase superfamily. Classic translation factor GTPase family. EF-G/EF-2 subfamily.

It is found in the cytoplasm. Its function is as follows. Catalyzes the GTP-dependent ribosomal translocation step during translation elongation. During this step, the ribosome changes from the pre-translocational (PRE) to the post-translocational (POST) state as the newly formed A-site-bound peptidyl-tRNA and P-site-bound deacylated tRNA move to the P and E sites, respectively. Catalyzes the coordinated movement of the two tRNA molecules, the mRNA and conformational changes in the ribosome. The chain is Elongation factor G from Staphylococcus aureus (strain Newman).